A 429-amino-acid chain; its full sequence is Forkhead box protein P3 (429 aa).

Positions M1–Q67 are disordered. S19 carries the post-translational modification Phosphoserine; by CDK2. Residue K31 is modified to N6-acetyllysine. A compositionally biased stretch (low complexity) spans T56 to Q67. Residues Q67–L75 carry the Nuclear export signal motif. The LXXLL motif motif lies at L91–L95. The interval L105–S189 is essential for transcriptional repressor activity and for interaction with KAT5 and HDAC7. The tract at residues L148–C198 is interaction with IKZF4. A Phosphothreonine; by CDK2 modification is found at T175. The C2H2-type zinc-finger motif lies at G196–H221. The short motif at V238–L247 is the Nuclear export signal element. The segment at V238–L259 is leucine-zipper. Glycyl lysine isopeptide (Lys-Gly) (interchain with G-Cter in ubiquitin) cross-links involve residues K249 and K251. An N6-acetyllysine; alternate mark is found at K262 and K267. Glycyl lysine isopeptide (Lys-Gly) (interchain with G-Cter in ubiquitin); alternate cross-links involve residues K262 and K267. The segment at S277–M336 is interaction with RUNX1. Residues R337–K423 constitute a DNA-binding region (fork-head). K393 participates in a covalent cross-link: Glycyl lysine isopeptide (Lys-Gly) (interchain with G-Cter in ubiquitin). A Nuclear localization signal motif is present at residues R414–R417. Position 418 is a phosphoserine (S418). Residues S418–P429 constitute a propeptide that is removed on maturation.

Homodimer. Dimerization is essential for its transcriptional regulator activity. Interacts with IKZF3. Interacts (via LXXLL motif) with isoform 4 of RORA (via AF-2 motif). Interacts with STUB1 and HSPA1A/B. Interacts with IKZF4, HDAC7 and KAT5. Interacts with RUNX1, RUNX2, RUNX3 and NFATC2. Interacts with RORC. Interacts with HDAC9 in the absence of T-cell stimulation. Interacts with RELA, PPP1CA, PPP1CB, PPP1CG, HSPA8 and USP7. In terms of processing, acetylation on lysine residues stabilizes FOXP3 and promotes differentiation of T-cells into induced regulatory T-cells (iTregs) associated with suppressive functions. Acetylation is mediated by a coordinated action of KAT5 and EP300/p300 acetyltransferases: EP300/p300 is required to enhance KAT5 autoacetylation, promoting acetylation of FOXP3 by KAT5. Deacetylated by SIRT1. Polyubiquitinated, leading to its proteasomal degradation in regulatory T-cells (Treg) which is mediated by STUB1 in a HSPA1A/B-dependent manner. Deubiquitinated by USP7 and USP44 leading to increase in protein stability. Post-translationally, phosphorylation at Ser-418 regulates its transcriptional repressor activity and consequently, regulatory T-cells (Treg) suppressive function. Phosphorylation by CDK2 negatively regulates its transcriptional activity and protein stability. In terms of processing, undergoes proteolytic cleavage in activated regulatory T-cells (Treg), and can be cleaved at either the N- or C-terminal site, or at both sites. Treg expressing the form cleaved at C-terminal site or both N- and C-terminal sites exhibit an increased induction of IL10 and an increased capacity to suppress proliferation of conventional T-cells in vitro. Treg expressing the form cleaved at only the C-terminal site are highly effective at preventing experimental colitis in an in vivo model of inflammatory bowel disease. High level of expression in thymus and spleen.

The protein localises to the nucleus. It localises to the cytoplasm. In terms of biological role, transcriptional regulator which is crucial for the development and inhibitory function of regulatory T-cells (Treg). Plays an essential role in maintaining homeostasis of the immune system by allowing the acquisition of full suppressive function and stability of the Treg lineage, and by directly modulating the expansion and function of conventional T-cells. Can act either as a transcriptional repressor or a transcriptional activator depending on its interactions with other transcription factors, histone acetylases and deacetylases. The suppressive activity of Treg involves the coordinate activation of many genes, including CTLA4 and TNFRSF18 by FOXP3 along with repression of genes encoding cytokines such as interleukin-2 (IL2) and interferon-gamma (IFNG). Inhibits cytokine production and T-cell effector function by repressing the activity of two key transcription factors, RELA and NFATC2. Mediates transcriptional repression of IL2 via its association with histone acetylase KAT5 and histone deacetylase HDAC7. Can activate the expression of TNFRSF18, IL2RA and CTLA4 and repress the expression of IL2 and IFNG via its association with transcription factor RUNX1. Inhibits the differentiation of IL17 producing helper T-cells (Th17) by antagonizing RORC function, leading to down-regulation of IL17 expression, favoring Treg development. Inhibits the transcriptional activator activity of RORA. Can repress the expression of IL2 and IFNG via its association with transcription factor IKZF4. This chain is Forkhead box protein P3 (Foxp3), found in Mus musculus (Mouse).